Here is a 179-residue protein sequence, read N- to C-terminus: Large ribosomal subunit protein uL5 (179 aa).

The protein belongs to the universal ribosomal protein uL5 family. As to quaternary structure, part of the 50S ribosomal subunit; part of the 5S rRNA/L5/L18/L25 subcomplex. Contacts the 5S rRNA and the P site tRNA. Forms a bridge to the 30S subunit in the 70S ribosome.

Functionally, this is one of the proteins that bind and probably mediate the attachment of the 5S RNA into the large ribosomal subunit, where it forms part of the central protuberance. In the 70S ribosome it contacts protein S13 of the 30S subunit (bridge B1b), connecting the 2 subunits; this bridge is implicated in subunit movement. Contacts the P site tRNA; the 5S rRNA and some of its associated proteins might help stabilize positioning of ribosome-bound tRNAs. The chain is Large ribosomal subunit protein uL5 from Agathobacter rectalis (strain ATCC 33656 / DSM 3377 / JCM 17463 / KCTC 5835 / VPI 0990) (Eubacterium rectale).